Consider the following 95-residue polypeptide: Integration host factor subunit beta (95 aa).

A disordered region spans residues 56–95 (RAPRTGRNPKTGETVELDGKHVPHFKPGKELRDRVNESIA). Residues 72 to 95 (LDGKHVPHFKPGKELRDRVNESIA) show a composition bias toward basic and acidic residues.

Belongs to the bacterial histone-like protein family. Heterodimer of an alpha and a beta chain.

In terms of biological role, this protein is one of the two subunits of integration host factor, a specific DNA-binding protein that functions in genetic recombination as well as in transcriptional and translational control. The chain is Integration host factor subunit beta from Pseudoalteromonas translucida (strain TAC 125).